The primary structure comprises 164 residues: Protein-export protein SecB (164 aa).

This sequence belongs to the SecB family. As to quaternary structure, homotetramer, a dimer of dimers. One homotetramer interacts with 1 SecA dimer.

The protein localises to the cytoplasm. Functionally, one of the proteins required for the normal export of preproteins out of the cell cytoplasm. It is a molecular chaperone that binds to a subset of precursor proteins, maintaining them in a translocation-competent state. It also specifically binds to its receptor SecA. The sequence is that of Protein-export protein SecB from Nitrosococcus oceani (strain ATCC 19707 / BCRC 17464 / JCM 30415 / NCIMB 11848 / C-107).